We begin with the raw amino-acid sequence, 1057 residues long: mRNA export factor elf1 (1057 aa).

2 consecutive ABC transporter domains span residues 440-659 and 692-1019; these read IEEE…VKPE and LKMT…KKKL. ATP contacts are provided by residues 477-484 and 726-733; these read GHNGCGKS and GPNGAGKS. A Phosphoserine modification is found at serine 733. The Chromo domain occupies 820 to 869; sequence RRVEALIGRQKLKKSFQYEIKWFGKPHKYNTWVSREILLENGFQKFVQAF. Residues 1020–1036 show a composition bias toward basic and acidic residues; it reads TRNEIKAKERRAREREL. The segment at 1020 to 1057 is disordered; the sequence is TRNEIKAKERRARERELAWLQSPKGTEKPKSFFSDDEE. A phosphoserine mark is found at serine 1041 and serine 1053.

Belongs to the ABC transporter superfamily. ABCF family. EF3 subfamily.

It is found in the cytoplasm. It localises to the nucleus. Functionally, has a direct role in the mRNA export process. Appears to act within the rae1 mediated mRNA export pathway. This Schizosaccharomyces pombe (strain 972 / ATCC 24843) (Fission yeast) protein is mRNA export factor elf1 (elf1).